A 187-amino-acid polypeptide reads, in one-letter code: dITP/XTP pyrophosphatase (187 aa).

7–12 (TNNPYK) is a substrate binding site. Residues E36 and D65 each coordinate Mg(2+). The active-site Proton acceptor is D65. Substrate-binding positions include T66, 140–143 (FGYD), K163, and 168–169 (HR).

This sequence belongs to the HAM1 NTPase family. In terms of assembly, homodimer. Requires Mg(2+) as cofactor.

It carries out the reaction XTP + H2O = XMP + diphosphate + H(+). It catalyses the reaction dITP + H2O = dIMP + diphosphate + H(+). The enzyme catalyses ITP + H2O = IMP + diphosphate + H(+). In terms of biological role, pyrophosphatase that catalyzes the hydrolysis of nucleoside triphosphates to their monophosphate derivatives, with a high preference for the non-canonical purine nucleotides XTP (xanthosine triphosphate), dITP (deoxyinosine triphosphate) and ITP. Seems to function as a house-cleaning enzyme that removes non-canonical purine nucleotides from the nucleotide pool, thus preventing their incorporation into DNA/RNA and avoiding chromosomal lesions. The protein is dITP/XTP pyrophosphatase of Pyrobaculum aerophilum (strain ATCC 51768 / DSM 7523 / JCM 9630 / CIP 104966 / NBRC 100827 / IM2).